A 305-amino-acid chain; its full sequence is tRNA dimethylallyltransferase (305 aa).

Position 8 to 15 (8 to 15 (GPTGTGKS)) interacts with ATP. Substrate is bound at residue 10 to 15 (TGTGKS).

This sequence belongs to the IPP transferase family. Monomer. Mg(2+) serves as cofactor.

The enzyme catalyses adenosine(37) in tRNA + dimethylallyl diphosphate = N(6)-dimethylallyladenosine(37) in tRNA + diphosphate. In terms of biological role, catalyzes the transfer of a dimethylallyl group onto the adenine at position 37 in tRNAs that read codons beginning with uridine, leading to the formation of N6-(dimethylallyl)adenosine (i(6)A). This is tRNA dimethylallyltransferase from Mycobacterium sp. (strain JLS).